A 167-amino-acid chain; its full sequence is Lipoprotein signal peptidase (167 aa).

A run of 3 helical transmembrane segments spans residues 12–32 (WLWL…AVVK), 68–88 (WQRW…IHWL), and 99–119 (GIAY…RLVL). Active-site residues include Asp124 and Asp142. Residues 137–157 (AFNLADSFIFIGAAMIVLDGF) traverse the membrane as a helical segment.

Belongs to the peptidase A8 family.

The protein localises to the cell inner membrane. The enzyme catalyses Release of signal peptides from bacterial membrane prolipoproteins. Hydrolyzes -Xaa-Yaa-Zaa-|-(S,diacylglyceryl)Cys-, in which Xaa is hydrophobic (preferably Leu), and Yaa (Ala or Ser) and Zaa (Gly or Ala) have small, neutral side chains.. The protein operates within protein modification; lipoprotein biosynthesis (signal peptide cleavage). In terms of biological role, this protein specifically catalyzes the removal of signal peptides from prolipoproteins. The polypeptide is Lipoprotein signal peptidase (Aeromonas hydrophila subsp. hydrophila (strain ATCC 7966 / DSM 30187 / BCRC 13018 / CCUG 14551 / JCM 1027 / KCTC 2358 / NCIMB 9240 / NCTC 8049)).